The chain runs to 389 residues: Phospho-N-acetylmuramoyl-pentapeptide-transferase (389 aa).

10 consecutive transmembrane segments (helical) span residues 25–45 (RAVM…PFVI), 74–94 (MGGV…ADWG), 97–117 (FIWI…VDDY), 134–154 (FFWQ…SVSE), 190–210 (ISYP…IVGS), 222–242 (GLVI…AYVM), 259–279 (AGEL…FLWF), 286–306 (VFMG…IAVI), 311–331 (IVLF…MLQV), and 366–386 (QVVV…LSTL).

This sequence belongs to the glycosyltransferase 4 family. MraY subfamily. Mg(2+) serves as cofactor.

The protein resides in the cell inner membrane. The catalysed reaction is UDP-N-acetyl-alpha-D-muramoyl-L-alanyl-gamma-D-glutamyl-meso-2,6-diaminopimeloyl-D-alanyl-D-alanine + di-trans,octa-cis-undecaprenyl phosphate = di-trans,octa-cis-undecaprenyl diphospho-N-acetyl-alpha-D-muramoyl-L-alanyl-D-glutamyl-meso-2,6-diaminopimeloyl-D-alanyl-D-alanine + UMP. Its pathway is cell wall biogenesis; peptidoglycan biosynthesis. In terms of biological role, catalyzes the initial step of the lipid cycle reactions in the biosynthesis of the cell wall peptidoglycan: transfers peptidoglycan precursor phospho-MurNAc-pentapeptide from UDP-MurNAc-pentapeptide onto the lipid carrier undecaprenyl phosphate, yielding undecaprenyl-pyrophosphoryl-MurNAc-pentapeptide, known as lipid I. In Ralstonia pickettii (strain 12J), this protein is Phospho-N-acetylmuramoyl-pentapeptide-transferase.